A 433-amino-acid chain; its full sequence is Serine hydroxymethyltransferase (433 aa).

(6S)-5,6,7,8-tetrahydrofolate contacts are provided by residues leucine 121 and 125–127 (GHI). N6-(pyridoxal phosphate)lysine is present on lysine 231.

Belongs to the SHMT family. As to quaternary structure, homodimer. The cofactor is pyridoxal 5'-phosphate.

The protein localises to the cytoplasm. The protein operates within amino-acid biosynthesis; glycine biosynthesis; glycine from L-serine: step 1/1. Functionally, catalyzes the reversible interconversion of serine and glycine with a modified folate serving as the one-carbon carrier. Also exhibits a pteridine-independent aldolase activity toward beta-hydroxyamino acids, producing glycine and aldehydes, via a retro-aldol mechanism. This is Serine hydroxymethyltransferase from Picrophilus torridus (strain ATCC 700027 / DSM 9790 / JCM 10055 / NBRC 100828 / KAW 2/3).